A 723-amino-acid polypeptide reads, in one-letter code: F-box protein MAX2 homolog B (723 aa).

Residues 2 to 55 enclose the F-box domain; it reads AKTPIPFTTLNDLPDVILSNIIAAVSDTRSRNATALVCHKWLVLERSTRTSLTL.

In terms of assembly, part of a putative SCF (SKP1/Cullin/F-box) ubiquitin ligase complex. Interacts with KAI2IA in the presence of (-)-germacrene D. In terms of tissue distribution, mainly expressed in fully expanded leaves, lateral roots, axillary and shoot apex, and, to a lower extent, in internodes and nodes.

The protein localises to the nucleus. The protein resides in the cytoplasm. Component of SCF(ASK-cullin-F-box) E3 ubiquitin ligase complexes, which may mediate the ubiquitination and subsequent proteasomal degradation of target proteins. Is necessary for responses to strigolactones and may be involved in the ubiquitin-mediated degradation of specific proteins that activate axillary growth. Targets probably SMAX1A to degradation upon the formation of an E3 SCF ubiquitin ligase complex (ASK-cullin-F-box) containing MAX2B and KAI2IA in response to (-)-germacrene D in the stigma. The protein is F-box protein MAX2 homolog B of Petunia hybrida (Petunia).